We begin with the raw amino-acid sequence, 662 residues long: DCC-interacting protein 13-beta (662 aa).

The BAR domain occupies 3 to 268; that stretch reads AVDKLLLEEA…ESVYTPDIDV (266 aa). Residues 277-375 enclose the PH domain; that stretch reads LIQKTGYLNL…WICAINNISR (99 aa). Positions 486 to 635 constitute a PID domain; that stretch reads SLLQQMFIVR…LMLSVPLTND (150 aa). The interval 643-662 is disordered; the sequence is DQADDTGGSPSDHRGAESEA. Positions 653–662 are enriched in basic and acidic residues; that stretch reads SDHRGAESEA.

As to quaternary structure, homodimer. Homotetramer. Binds RAB5A/Rab5 through an N-terminal domain. This interaction is essential for its recruitment to endosomal membranes as well as its role in cell proliferation. Binds subunits of the NuRD/MeCP1 complex. Interacts with FSHR; interaction is independent of follicle stimulating hormone stimulation. Interacts with APPL1; the interaction is decreased by adiponectin in a time-dependent manner. Forms a complex comprising APPL1, RUVBL2, CTNNB1, HDAC1 and HDAC2; interaction reduces interaction between CTNNB1, HDAC1, HDAC2 and RUVBL2 leading to the decrease of deacetylase activity of this complex; affects the recruitment of repressive complexes to the Wnt target genes. Interacts (via BAR domain) with TBC1D1; interaction is dependent of TBC1D1 phosphorylation at 'Ser-235'; interaction diminishes the phosphorylation of TBC1D1 at 'Thr-596', resulting in inhibition of SLC2A4 translocation and glucose uptake. Interacts with ANXA2; targets APPL2 to endosomes and acting in parallel to RAB5A. Interacts with RAB31 (in GTP-bound form); interaction contributes to or enhances recruitment of APPL2 to the phagosomes; interaction enhances Fc-gamma receptor-mediated phagocytosis through PI3K/Akt signaling in macrophages. Interacts with PIK3R1; forms a complex with PIK3R1 and APPL1. Interacts (via BAR domain) with ADIPOR1; hinders the accessibility of APPL1 to ADIPOR1; negatively regulates adiponectin signaling; ADIPOQ dissociates this interaction and facilitates the recruitment of APPL1 to ADIPOR1. Interacts (via BAR domain) with ADIPOR2; ADIPOQ dissociates this interaction.

It localises to the early endosome membrane. The protein resides in the nucleus. The protein localises to the cell membrane. It is found in the endosome membrane. Its subcellular location is the cytoplasm. It localises to the cytoplasmic vesicle. The protein resides in the phagosome. The protein localises to the cell projection. It is found in the ruffle. Its subcellular location is the ruffle membrane. It localises to the phagosome membrane. Multifunctional adapter protein that binds to various membrane receptors, nuclear factors and signaling proteins to regulate many processes, such as cell proliferation, immune response, endosomal trafficking and cell metabolism. Regulates signaling pathway leading to cell proliferation through interaction with RAB5A and subunits of the NuRD/MeCP1 complex. Plays a role in immune response by modulating phagocytosis, inflammatory and innate immune responses. In macrophages, enhances Fc-gamma receptor-mediated phagocytosis through interaction with RAB31 leading to activation of PI3K/Akt signaling. In response to LPS, modulates inflammatory responses by playing a key role on the regulation of TLR4 signaling and in the nuclear translocation of RELA/NF-kappa-B p65 and the secretion of pro- and anti-inflammatory cytokines. Also functions as a negative regulator of innate immune response via inhibition of AKT1 signaling pathway by forming a complex with APPL1 and PIK3R1. Plays a role in endosomal trafficking of TGFBR1 from the endosomes to the nucleus. Plays a role in cell metabolism by regulating adiponecting ans insulin signaling pathways and adaptative thermogenesis. In muscle, negatively regulates adiponectin-simulated glucose uptake and fatty acid oyidation by inhibiting adiponectin signaling pathway through APPL1 sequestration thereby antagonizing APPL1 action. In muscles, negatively regulates insulin-induced plasma membrane recruitment of GLUT4 and glucose uptake through interaction with TBC1D1. Plays a role in cold and diet-induced adaptive thermogenesis by activating ventromedial hypothalamus (VMH) neurons throught AMPK inhibition which enhances sympathetic outflow to subcutaneous white adipose tissue (sWAT), sWAT beiging and cold tolerance. Also plays a role in other signaling pathways namely Wnt/beta-catenin, HGF and glucocorticoid receptor signaling. Positive regulator of beta-catenin/TCF-dependent transcription through direct interaction with RUVBL2/reptin resulting in the relief of RUVBL2-mediated repression of beta-catenin/TCF target genes by modulating the interactions within the beta-catenin-reptin-HDAC complex. May affect adult neurogenesis in hippocampus and olfactory system via regulating the sensitivity of glucocorticoid receptor. Required for fibroblast migration through HGF cell signaling. The polypeptide is DCC-interacting protein 13-beta (Rattus norvegicus (Rat)).